A 257-amino-acid chain; its full sequence is Na(+)-translocating NADH-quinone reductase subunit C (257 aa).

The chain crosses the membrane as a helical span at residues 12–32 (LFVVIALSLVCSIIVSAAAVG). T225 carries the FMN phosphoryl threonine modification.

Belongs to the NqrC family. In terms of assembly, composed of six subunits; NqrA, NqrB, NqrC, NqrD, NqrE and NqrF. FMN serves as cofactor.

The protein localises to the cell inner membrane. The enzyme catalyses a ubiquinone + n Na(+)(in) + NADH + H(+) = a ubiquinol + n Na(+)(out) + NAD(+). In terms of biological role, NQR complex catalyzes the reduction of ubiquinone-1 to ubiquinol by two successive reactions, coupled with the transport of Na(+) ions from the cytoplasm to the periplasm. NqrA to NqrE are probably involved in the second step, the conversion of ubisemiquinone to ubiquinol. The polypeptide is Na(+)-translocating NADH-quinone reductase subunit C (Vibrio cholerae serotype O1 (strain ATCC 39541 / Classical Ogawa 395 / O395)).